The sequence spans 336 residues: 3-hydroxyisobutyrate dehydrogenase, mitochondrial (336 aa).

A mitochondrion-targeting transit peptide spans 1 to 36 (MAASLRLRGAASGLRYWSRRQPPAVASLAAVCSRSM). Position 40–69 (40–69 (TPVGFIGVGNMGNPMAKNLMKHGYPLIIYD)) interacts with NAD(+). N6-acetyllysine; alternate is present on residues Lys60 and Lys76. Lys60 and Lys76 each carry N6-succinyllysine; alternate. N6-succinyllysine is present on Lys95. Residues 103–104 (LP) and Asn108 contribute to the NAD(+) site. Lys121 is subject to N6-acetyllysine. Thr134 provides a ligand contact to NAD(+). Lys141 carries the N6-succinyllysine modification. At Lys145 the chain carries N6-acetyllysine. Lys149 is subject to N6-acetyllysine; alternate. N6-succinyllysine; alternate is present on Lys149. Lys209 is a catalytic residue. N6-acetyllysine; alternate is present on residues Lys238 and Lys242. N6-succinyllysine; alternate occurs at positions 238 and 242. Residue Lys284 participates in NAD(+) binding. Lys297 carries the N6-succinyllysine modification. N6-acetyllysine; alternate is present on Lys321. Lys321 bears the N6-succinyllysine; alternate mark.

The protein belongs to the HIBADH-related family. 3-hydroxyisobutyrate dehydrogenase subfamily. As to quaternary structure, homodimer.

It localises to the mitochondrion. The enzyme catalyses 3-hydroxy-2-methylpropanoate + NAD(+) = 2-methyl-3-oxopropanoate + NADH + H(+). It participates in amino-acid degradation; L-valine degradation. The protein is 3-hydroxyisobutyrate dehydrogenase, mitochondrial (HIBADH) of Bos taurus (Bovine).